A 648-amino-acid chain; its full sequence is MGIQILPPQLANQIAAGEVVERPASVVKELVENSLDAGATRIDIEIDKGGSKLIKIRDNGSGIPKDELALALSRHATSKLHSLDDLEAILSFGFRGEALASISSVSRLTLTSRTAEQTEAWQAYAEGADMAVKVMPAAHPVGSTIEVVDLFFNTPARRRFLKSDKTEFTHIDEWLKRIALVRGDIHFTLTHNGKIVRNCRPAMNEPQYLQRLTQVAGRQFADEALRVECQHDDLRLSGYLQSPWSTVLTDTHYFYVNGRLVRDRLVNHAVRQAFAQKAEVEQPGYVLMLDIDPHQVDVNVHPAKHEVRFHQSRYVHDYILQALQSALEEAGELGFERPFEPSSPQIRDEASLSETGAQTQTEHHAFELQSPESKTHSTWNEASRVDTSRAETSRESRIDSPLGERTRDIASARPYAGVQSNAYGSMAVPRESRSGSAGESRARAELPSKVAIASYGELLQTPSYSVQDKPYQPVLAMPAILNGQYWVLAQGQNLSLLPIQSVALATRSHEVETKLATGLIGQPLLMPVSIAADTDWPALLEEHETLIRQLGLELTIRYQQLIIKKVPPYLRDSQLAKVIPEWLQSLRFEAPAPNALAVWLAEQSLTGFTSAADIWAAYCQLTEEKRQQIADKAVSLPWQSWLEEQASE.

Positions 336–443 (ERPFEPSSPQ…SGSAGESRAR (108 aa)) are disordered. The segment covering 370 to 381 (SPESKTHSTWNE) has biased composition (polar residues). Positions 383 to 410 (SRVDTSRAETSRESRIDSPLGERTRDIA) are enriched in basic and acidic residues.

It belongs to the DNA mismatch repair MutL/HexB family.

This protein is involved in the repair of mismatches in DNA. It is required for dam-dependent methyl-directed DNA mismatch repair. May act as a 'molecular matchmaker', a protein that promotes the formation of a stable complex between two or more DNA-binding proteins in an ATP-dependent manner without itself being part of a final effector complex. The chain is DNA mismatch repair protein MutL from Shewanella sp. (strain ANA-3).